The primary structure comprises 134 residues: Large ribosomal subunit protein uL22 (134 aa).

Belongs to the universal ribosomal protein uL22 family. Part of the 50S ribosomal subunit.

In terms of biological role, this protein binds specifically to 23S rRNA; its binding is stimulated by other ribosomal proteins, e.g. L4, L17, and L20. It is important during the early stages of 50S assembly. It makes multiple contacts with different domains of the 23S rRNA in the assembled 50S subunit and ribosome. The globular domain of the protein is located near the polypeptide exit tunnel on the outside of the subunit, while an extended beta-hairpin is found that lines the wall of the exit tunnel in the center of the 70S ribosome. In Rhodococcus jostii (strain RHA1), this protein is Large ribosomal subunit protein uL22.